Reading from the N-terminus, the 507-residue chain is Histidine ammonia-lyase (507 aa).

The 5-imidazolinone (Ala-Gly) cross-link spans 143–145 (ASG). 2,3-didehydroalanine (Ser) is present on Ser-144.

The protein belongs to the PAL/histidase family. Contains an active site 4-methylidene-imidazol-5-one (MIO), which is formed autocatalytically by cyclization and dehydration of residues Ala-Ser-Gly.

It localises to the cytoplasm. It carries out the reaction L-histidine = trans-urocanate + NH4(+). The protein operates within amino-acid degradation; L-histidine degradation into L-glutamate; N-formimidoyl-L-glutamate from L-histidine: step 1/3. This Alkaliphilus oremlandii (strain OhILAs) (Clostridium oremlandii (strain OhILAs)) protein is Histidine ammonia-lyase.